The sequence spans 315 residues: MQVTFLGTSSGVPTRGRNVSSVALRLPQRSELWLFDCGEGTQHQFLRCDLRLSQLRRVFITHMHGDHVFGLPGLLASLGLGSTSNGVDLYGPDPLDAYLQGVLRTSSTRIGYPLAIHRVREAAEQNTVVFEDDDLIVTAAPLNHRVPAYAYRAEQKPRAGRFDIDKARELQIPPGPVYAALKRGESVTLDDGRTIDGRTLCGPEQPGVSVVYCTDTVFCEAAVQLAQGADLLIHESTFSHAEADMAFKRQHSTSTMAAQTAAEAGVKQLALTHLSPRYAPGNAVTADDLVAEASAIFPNTILARDFLNVDVNPSK.

Positions 62, 64, 66, 67, 144, 215, and 273 each coordinate Zn(2+). D66 acts as the Proton acceptor in catalysis.

This sequence belongs to the RNase Z family. Homodimer. The cofactor is Zn(2+).

It catalyses the reaction Endonucleolytic cleavage of RNA, removing extra 3' nucleotides from tRNA precursor, generating 3' termini of tRNAs. A 3'-hydroxy group is left at the tRNA terminus and a 5'-phosphoryl group is left at the trailer molecule.. Zinc phosphodiesterase, which displays some tRNA 3'-processing endonuclease activity. Probably involved in tRNA maturation, by removing a 3'-trailer from precursor tRNA. This is Ribonuclease Z from Synechococcus sp. (strain CC9311).